The following is a 64-amino-acid chain: Large ribosomal subunit protein uL29 (64 aa).

Belongs to the universal ribosomal protein uL29 family.

This Nitratiruptor sp. (strain SB155-2) protein is Large ribosomal subunit protein uL29.